Here is a 364-residue protein sequence, read N- to C-terminus: Fructose-bisphosphate aldolase A (364 aa).

Tyr-5 carries the phosphotyrosine modification. Residue Thr-9 is modified to Phosphothreonine. Residues Ser-36 and Ser-39 each carry the phosphoserine modification. Lys-42 bears the N6-acetyllysine; alternate mark. Lys-42 participates in a covalent cross-link: Glycyl lysine isopeptide (Lys-Gly) (interchain with G-Cter in SUMO1); alternate. Lys-42 is covalently cross-linked (Glycyl lysine isopeptide (Lys-Gly) (interchain with G-Cter in SUMO2); alternate). Residue Arg-43 participates in beta-D-fructose 1,6-bisphosphate binding. Ser-46 carries the post-translational modification Phosphoserine. The residue at position 99 (Lys-99) is an N6-(2-hydroxyisobutyryl)lysine. Lys-108 bears the N6-acetyllysine mark. Lys-111 is subject to N6-acetyllysine; alternate. Lys-111 carries the post-translational modification N6-malonyllysine; alternate. Phosphoserine is present on Ser-132. N6-(2-hydroxyisobutyryl)lysine is present on Lys-147. The active-site Proton acceptor is the Glu-188. The active-site Schiff-base intermediate with dihydroxyacetone-P is the Lys-230. The residue at position 272 (Ser-272) is a Phosphoserine. Beta-D-fructose 1,6-bisphosphate is bound by residues 272–274 (SGG), Ser-301, and Arg-304. N6-malonyllysine is present on Lys-312. Lys-330 is subject to N6-acetyllysine.

It belongs to the class I fructose-bisphosphate aldolase family. Homotetramer. Interacts with SNX9 and WAS. Interacts with FBP2; the interaction blocks FBP2 inhibition by physiological concentrations of AMP and reduces inhibition by Ca(2+). As to expression, expressed in muscle, brain and hepatoma cells.

It is found in the cytoplasm. The protein localises to the myofibril. The protein resides in the sarcomere. It localises to the i band. Its subcellular location is the m line. The enzyme catalyses beta-D-fructose 1,6-bisphosphate = D-glyceraldehyde 3-phosphate + dihydroxyacetone phosphate. Its pathway is carbohydrate degradation; glycolysis; D-glyceraldehyde 3-phosphate and glycerone phosphate from D-glucose: step 4/4. Functionally, catalyzes the reversible conversion of beta-D-fructose 1,6-bisphosphate (FBP) into two triose phosphate and plays a key role in glycolysis and gluconeogenesis. In addition, may also function as scaffolding protein. The protein is Fructose-bisphosphate aldolase A (Aldoa) of Rattus norvegicus (Rat).